A 369-amino-acid polypeptide reads, in one-letter code: Cobalt-precorrin-5B C(1)-methyltransferase (369 aa).

It belongs to the CbiD family.

The catalysed reaction is Co-precorrin-5B + S-adenosyl-L-methionine = Co-precorrin-6A + S-adenosyl-L-homocysteine. The protein operates within cofactor biosynthesis; adenosylcobalamin biosynthesis; cob(II)yrinate a,c-diamide from sirohydrochlorin (anaerobic route): step 6/10. In terms of biological role, catalyzes the methylation of C-1 in cobalt-precorrin-5B to form cobalt-precorrin-6A. This is Cobalt-precorrin-5B C(1)-methyltransferase from Brucella melitensis biotype 2 (strain ATCC 23457).